The following is a 398-amino-acid chain: 1-deoxy-D-xylulose 5-phosphate reductoisomerase (398 aa).

Threonine 11, glycine 12, serine 13, isoleucine 14, and asparagine 125 together coordinate NADPH. Position 126 (lysine 126) interacts with 1-deoxy-D-xylulose 5-phosphate. Residue glutamate 127 participates in NADPH binding. Position 151 (aspartate 151) interacts with Mn(2+). 1-deoxy-D-xylulose 5-phosphate is bound by residues serine 152, glutamate 153, serine 186, and histidine 209. Glutamate 153 is a binding site for Mn(2+). Glycine 215 contacts NADPH. Residues serine 222, asparagine 227, lysine 228, and glutamate 231 each coordinate 1-deoxy-D-xylulose 5-phosphate. Glutamate 231 lines the Mn(2+) pocket.

Belongs to the DXR family. Mg(2+) serves as cofactor. The cofactor is Mn(2+).

The catalysed reaction is 2-C-methyl-D-erythritol 4-phosphate + NADP(+) = 1-deoxy-D-xylulose 5-phosphate + NADPH + H(+). The protein operates within isoprenoid biosynthesis; isopentenyl diphosphate biosynthesis via DXP pathway; isopentenyl diphosphate from 1-deoxy-D-xylulose 5-phosphate: step 1/6. Its function is as follows. Catalyzes the NADPH-dependent rearrangement and reduction of 1-deoxy-D-xylulose-5-phosphate (DXP) to 2-C-methyl-D-erythritol 4-phosphate (MEP). This Acinetobacter baylyi (strain ATCC 33305 / BD413 / ADP1) protein is 1-deoxy-D-xylulose 5-phosphate reductoisomerase.